A 327-amino-acid polypeptide reads, in one-letter code: Xylosidase/arabinosidase 43A (327 aa).

The Proton acceptor role is filled by aspartate 12. Glutamate 228 serves as the catalytic Proton donor.

It belongs to the glycosyl hydrolase 43 family.

The protein resides in the secreted. It catalyses the reaction Hydrolysis of (1-&gt;4)-beta-D-xylans, to remove successive D-xylose residues from the non-reducing termini.. The enzyme catalyses Hydrolysis of terminal non-reducing alpha-L-arabinofuranoside residues in alpha-L-arabinosides.. Its activity is regulated as follows. Activity is inhibited by Ag(+), Li(+), Pb(2+), Cu(2+), Cr(3+), Co(3+), Fe(3+), Ni(2+), Mg(2+), Zn(2+), EDTA and SDS; but not by Mn(2+), Ca(2+) and beta-mercaptoethanol. In terms of biological role, bifunctional beta-xylosidase/alpha-L-arabinosidases with a low level of xylanase activity. Is most active on 4-nitrophenyl beta-D-xylopyranoside (pNPX) (defined as 100%), moderate on p-nitrophenyl-alpha-L-arabinofuranoside (pNPA) (23.7%), and weak on beechwood xylan (15.9%) and birchwood xylan (15.2%). Is able to attack xylooligosacchardies with degrees of polymerisation of 2-5, releasing the amounts of reducing sugars in the order of xylopentose &gt; xylotetraose &gt; xylotriose &gt; xylobiose, i.e. the rate of xylose released from xylooligosacchardies increased with the chain length. No activity is detected in the presence of carboxymethyl cellulose-sodium (CMC-Na), sugar beet arabinan, AZCL-arabinan (debranched), 4-nitrophenyl a-D - galactopyranoside, 2-nitrophenyl beta-D-galactopyranoside, and 4-nitrophenyl alpha-D-glucopyranoside. This Humicola insolens (Soft-rot fungus) protein is Xylosidase/arabinosidase 43A.